The chain runs to 325 residues: Peroxidase 47 (325 aa).

The signal sequence occupies residues M1–G36. 4 disulfide bridges follow: C46/C125, C79/C84, C131/C321, and C209/C235. H77 functions as the Proton acceptor in the catalytic mechanism. Residues D78, G83, D85, and S87 each contribute to the Ca(2+) site. A substrate-binding site is contributed by P172. N177 carries an N-linked (GlcNAc...) asparagine glycan. H202 provides a ligand contact to heme b. Residue T203 coordinates Ca(2+). Residues D246, T248, and D253 each coordinate Ca(2+).

The protein belongs to the peroxidase family. Classical plant (class III) peroxidase subfamily. It depends on heme b as a cofactor. Requires Ca(2+) as cofactor.

Its subcellular location is the secreted. The catalysed reaction is 2 a phenolic donor + H2O2 = 2 a phenolic radical donor + 2 H2O. Functionally, removal of H(2)O(2), oxidation of toxic reductants, biosynthesis and degradation of lignin, suberization, auxin catabolism, response to environmental stresses such as wounding, pathogen attack and oxidative stress. These functions might be dependent on each isozyme/isoform in each plant tissue. In Arabidopsis thaliana (Mouse-ear cress), this protein is Peroxidase 47 (PER47).